The primary structure comprises 374 residues: MILATTSSTCATLGEMVTVLSIDGGGIKGIIPAIILEFLEGQLQEVDNNADARLADYFDVIGGTSTGGLLTAMITTPNENNRPFAAAKDIVPFYFEHGPHIFNYSGSILGPMYDGKYLLQVLQEKLGETRVHQALTEVAISSFDIKTNKPVIFTKSNLAESPQLDAKMYDICYSTAAAPIYFPPHYFVTHTSNGDRYEFNLVDGGVATVGDPALLSLSVATKLAQVDPKFASIKSLDYKQMLLLSLGTGTNSEFDKTYTAQETAKWGPLRWMLAIQQMTNAASSYMTDYYISTVFQARHSQNNYLRVQENALTGTTTEMDDASEANMELLVQVGETLLKKPVSKDSPETYEEALKRFAKLLSDRKKLRANKASY.

Positions Met1–Ala11 are cleaved as a signal peptide. A PNPLA domain is found at Leu20–Leu217. The GXGXXG motif lies at Gly24 to Gly29. The GXSXG motif lies at Gly63–Gly67. The active-site Nucleophile is Ser65. Asn103 is a glycosylation site (N-linked (GlcNAc...) asparagine). Residue Asp203 is the Proton acceptor of the active site. The DGA/G signature appears at Asp203–Gly205. The stretch at Glu309 to Ala372 forms a coiled coil.

It belongs to the patatin family.

The protein localises to the vacuole. Its function is as follows. Probable lipolytic acyl hydrolase (LAH), an activity which is thought to be involved in the response of tubers to pathogens. This chain is Patatin-2-Kuras 4 (pat2-k4), found in Solanum tuberosum (Potato).